The sequence spans 240 residues: Lactate utilization protein C (240 aa).

The protein belongs to the LutC/YkgG family.

Its function is as follows. Is involved in L-lactate degradation and allows cells to grow with lactate as the sole carbon source. This chain is Lactate utilization protein C, found in Geobacillus thermodenitrificans (strain NG80-2).